We begin with the raw amino-acid sequence, 456 residues long: PTS system sucrose-specific EIIBC component (456 aa).

In terms of domain architecture, PTS EIIB type-1 spans 4 to 87 (EQISRSLLPL…IQAAGISESS (84 aa)). The active-site Phosphocysteine intermediate; for EIIB activity is the cysteine 26. The PTS EIIC type-1 domain occupies 107–456 (RLLSNIFVPI…LTLKYKTDAE (350 aa)). The next 10 membrane-spanning stretches (helical) occupy residues 112–132 (IFVP…LLGM), 144–164 (ALYI…PILI), 181–201 (TLGG…AAGF), 209–229 (IEVA…AVWF), 247–267 (LILT…LLIG), 288–308 (AGWL…ITGI), 329–349 (FLLP…FAVW), 360–380 (ITLP…IFGI), 388–408 (FIAA…MHVY), and 428–448 (LLNY…LSLT).

It localises to the cell inner membrane. It catalyses the reaction N(pros)-phospho-L-histidyl-[protein](out) + sucrose = sucrose 6(G)-phosphate(in) + L-histidyl-[protein]. Functionally, the phosphoenolpyruvate-dependent sugar phosphotransferase system (sugar PTS), a major carbohydrate active transport system, catalyzes the phosphorylation of incoming sugar substrates concomitantly with their translocation across the cell membrane. This system is involved in sucrose transport. This is PTS system sucrose-specific EIIBC component from Klebsiella pneumoniae.